Here is a 487-residue protein sequence, read N- to C-terminus: WD-40 repeat-containing protein MSI5 (487 aa).

At M1 the chain carries N-acetylmethionine. A compositionally biased stretch (low complexity) spans 1-12; that stretch reads MESEAAATVQAT. The disordered stretch occupies residues 1–44; the sequence is MESEAAATVQATRPRRAPRTPVTAILTDKRRRKPKSNNESQLPF. The short motif at 14-21 is the Nuclear localization signal element; it reads PRRAPRTP. WD repeat units lie at residues 142 to 182, 197 to 237, 270 to 310, 315 to 355, 364 to 404, and 419 to 466; these read IHPG…DRYA, GHQD…TMAG, GHKD…SPAM, AHDA…SNGV, GHRA…KKSE, and GHRD…YRPE. Residues 236–268 form a disordered region; sequence AGSDSKSPGSSFKQTGEGSDKTGGPSVGPRGIY. Over residues 237 to 252 the composition is skewed to polar residues; sequence GSDSKSPGSSFKQTGE. The DWD box motif lies at 288 to 303; the sequence is FCSVGDDSCLMLWDAR.

Belongs to the WD repeat RBAP46/RBAP48/MSI1 family. In terms of assembly, interacts with AHL16. Interacts with LHP1, PDP2, PDP3 and PDP6. Component of the PRC2 (polycomb repressive complex 2) complex which regulates histone methylation on histone H3K27.

The protein localises to the nucleus. In terms of biological role, core histone-binding subunit that may target chromatin assembly factors, chromatin remodeling factors and histone deacetylases to their histone substrates in a manner that is regulated by nucleosomal DNA. Acts together with PDP1 and MSI4/FVE to regulate the function of the PRC2 complex on FLC. This is WD-40 repeat-containing protein MSI5 from Arabidopsis thaliana (Mouse-ear cress).